The primary structure comprises 377 residues: Ribosomal RNA large subunit methyltransferase G (377 aa).

The protein belongs to the methyltransferase superfamily. RlmG family.

It localises to the cytoplasm. The catalysed reaction is guanosine(1835) in 23S rRNA + S-adenosyl-L-methionine = N(2)-methylguanosine(1835) in 23S rRNA + S-adenosyl-L-homocysteine + H(+). Its function is as follows. Specifically methylates the guanine in position 1835 (m2G1835) of 23S rRNA. This Shewanella oneidensis (strain ATCC 700550 / JCM 31522 / CIP 106686 / LMG 19005 / NCIMB 14063 / MR-1) protein is Ribosomal RNA large subunit methyltransferase G.